Consider the following 620-residue polypeptide: Chaperone protein HscA homolog (620 aa).

The protein belongs to the heat shock protein 70 family.

Functionally, chaperone involved in the maturation of iron-sulfur cluster-containing proteins. Has a low intrinsic ATPase activity which is markedly stimulated by HscB. The sequence is that of Chaperone protein HscA homolog from Shewanella woodyi (strain ATCC 51908 / MS32).